The primary structure comprises 197 residues: Adenylate kinase (197 aa).

An ATP-binding site is contributed by 16 to 21 (GAGKGT). Residues 36-65 (STGDILRDHVARGTALGQQAGPLMEAGQLV) are NMP. AMP-binding positions include T37, R42, 63–65 (QLV), 90–93 (GFPR), and Q97. An LID region spans residues 131-147 (DRGRQAVAEGRAPRADD). R132 is a binding site for ATP. The disordered stretch occupies residues 137–158 (VAEGRAPRADDNEETARKRQQV). Residues 141–153 (RAPRADDNEETAR) show a composition bias toward basic and acidic residues. AMP is bound by residues R144 and R155. An ATP-binding site is contributed by G183.

It belongs to the adenylate kinase family. Monomer.

It localises to the cytoplasm. The catalysed reaction is AMP + ATP = 2 ADP. It functions in the pathway purine metabolism; AMP biosynthesis via salvage pathway; AMP from ADP: step 1/1. Its function is as follows. Catalyzes the reversible transfer of the terminal phosphate group between ATP and AMP. Plays an important role in cellular energy homeostasis and in adenine nucleotide metabolism. The protein is Adenylate kinase of Deinococcus radiodurans (strain ATCC 13939 / DSM 20539 / JCM 16871 / CCUG 27074 / LMG 4051 / NBRC 15346 / NCIMB 9279 / VKM B-1422 / R1).